The following is a 535-amino-acid chain: RNA-splicing ligase RtcB homolog 1 (535 aa).

Residues 1–16 show a composition bias toward basic residues; it reads MAKSRYSRKNKGKKLQ. The interval 1 to 29 is disordered; it reads MAKSRYSRKNKGKKLQRVQENTVSTEEKS. 5 residues coordinate Mn(2+): aspartate 152, cysteine 155, histidine 260, histidine 292, and histidine 383. 259-263 lines the GMP pocket; it reads NHYLE. Residues 383–384, 432–435, serine 439, 458–461, and lysine 534 each bind GMP; these read HN, GGSM, and HGAG. Histidine 458 functions as the GMP-histidine intermediate in the catalytic mechanism.

Belongs to the RtcB family. Catalytic component of the tRNA-splicing ligase complex. Mn(2+) is required as a cofactor.

It carries out the reaction a 3'-end 3'-phospho-ribonucleotide-RNA + a 5'-end dephospho-ribonucleoside-RNA + GTP = a ribonucleotidyl-ribonucleotide-RNA + GMP + diphosphate. The enzyme catalyses a 3'-end 2',3'-cyclophospho-ribonucleotide-RNA + a 5'-end dephospho-ribonucleoside-RNA + GTP + H2O = a ribonucleotidyl-ribonucleotide-RNA + GMP + diphosphate + H(+). Its function is as follows. Catalytic subunit of the tRNA-splicing ligase complex that acts by directly joining spliced tRNA halves to mature-sized tRNAs by incorporating the precursor-derived splice junction phosphate into the mature tRNA as a canonical 3',5'-phosphodiester. May act as an RNA ligase with broad substrate specificity, and may function toward other RNAs. This is RNA-splicing ligase RtcB homolog 1 from Entamoeba dispar (strain ATCC PRA-260 / SAW760).